The primary structure comprises 252 residues: 5-oxoprolinase subunit A (252 aa).

Belongs to the LamB/PxpA family. Forms a complex composed of PxpA, PxpB and PxpC.

It catalyses the reaction 5-oxo-L-proline + ATP + 2 H2O = L-glutamate + ADP + phosphate + H(+). In terms of biological role, catalyzes the cleavage of 5-oxoproline to form L-glutamate coupled to the hydrolysis of ATP to ADP and inorganic phosphate. The protein is 5-oxoprolinase subunit A of Staphylococcus carnosus (strain TM300).